Here is a 377-residue protein sequence, read N- to C-terminus: uncharacterized protein (377 aa).

The N-terminal stretch at 1–23 is a signal peptide; sequence MLKFRNFFKLTLLTLASAFFLSG. C24 carries N-palmitoyl cysteine lipidation. A lipid anchor (S-diacylglycerol cysteine) is attached at C24.

Its subcellular location is the cell membrane. This is an uncharacterized protein from Mycoplasma genitalium (strain ATCC 33530 / DSM 19775 / NCTC 10195 / G37) (Mycoplasmoides genitalium).